The primary structure comprises 159 residues: Cytochrome b6-f complex subunit 4 (159 aa).

Transmembrane regions (helical) follow at residues 35–55 (ILIFGVVILGTIFGVIALAVL), 93–113 (LLGVVLMAAIPIGLALVPFIE), and 127–147 (ATAVFLIGTVVTMYLGIGAMI).

This sequence belongs to the cytochrome b family. PetD subfamily. The 4 large subunits of the cytochrome b6-f complex are cytochrome b6, subunit IV (17 kDa polypeptide, PetD), cytochrome f and the Rieske protein, while the 4 small subunits are PetG, PetL, PetM and PetN. The complex functions as a dimer.

The protein localises to the cell inner membrane. Component of the cytochrome b6-f complex, which mediates electron transfer between photosystem II (PSII) and photosystem I (PSI), cyclic electron flow around PSI, and state transitions. In Gloeobacter violaceus (strain ATCC 29082 / PCC 7421), this protein is Cytochrome b6-f complex subunit 4.